An 864-amino-acid polypeptide reads, in one-letter code: DNA mismatch repair protein MutS (864 aa).

607-614 contributes to the ATP binding site; that stretch reads GPNMGGKS.

It belongs to the DNA mismatch repair MutS family.

Functionally, this protein is involved in the repair of mismatches in DNA. It is possible that it carries out the mismatch recognition step. This protein has a weak ATPase activity. This chain is DNA mismatch repair protein MutS, found in Neisseria meningitidis serogroup C / serotype 2a (strain ATCC 700532 / DSM 15464 / FAM18).